The chain runs to 402 residues: Na(+)/H(+) antiporter NhaA 2 (402 aa).

Transmembrane regions (helical) follow at residues 18 to 38, 63 to 83, 99 to 119, 129 to 149, 158 to 178, 182 to 202, 210 to 230, 258 to 278, 296 to 316, 329 to 349, and 365 to 385; these read AGGI…NTAL, ALLW…GLEV, SLPL…FYGI, GWAI…ALLG, ALLL…IAIF, GVEL…SAFG, IPYI…GVHA, ALHS…NAGV, IALG…WLAV, WLQV…SLFI, and IGVL…LVLG.

The protein belongs to the NhaA Na(+)/H(+) (TC 2.A.33) antiporter family.

The protein localises to the cell inner membrane. It carries out the reaction Na(+)(in) + 2 H(+)(out) = Na(+)(out) + 2 H(+)(in). Its function is as follows. Na(+)/H(+) antiporter that extrudes sodium in exchange for external protons. The polypeptide is Na(+)/H(+) antiporter NhaA 2 (Erythrobacter litoralis (strain HTCC2594)).